The sequence spans 203 residues: Urease accessory protein UreG (203 aa).

Residue 11-18 participates in GTP binding; that stretch reads GPVGSGKT.

It belongs to the SIMIBI class G3E GTPase family. UreG subfamily. As to quaternary structure, homodimer. UreD, UreF and UreG form a complex that acts as a GTP-hydrolysis-dependent molecular chaperone, activating the urease apoprotein by helping to assemble the nickel containing metallocenter of UreC. The UreE protein probably delivers the nickel.

It localises to the cytoplasm. Facilitates the functional incorporation of the urease nickel metallocenter. This process requires GTP hydrolysis, probably effectuated by UreG. In Prochlorococcus marinus (strain MIT 9312), this protein is Urease accessory protein UreG.